The primary structure comprises 91 residues: Long neurotoxin OH-56 (91 aa).

Residues Met-1–Thr-21 form the signal peptide. 5 disulfides stabilise this stretch: Cys-24-Cys-42, Cys-35-Cys-63, Cys-48-Cys-52, Cys-67-Cys-78, and Cys-79-Cys-84.

This sequence belongs to the three-finger toxin family. Long-chain subfamily. Type II alpha-neurotoxin sub-subfamily. In terms of tissue distribution, expressed by the venom gland.

It localises to the secreted. Functionally, binds with high affinity to muscular (alpha-1/CHRNA1) and neuronal (alpha-7/CHRNA7) nicotinic acetylcholine receptor (nAChR) and inhibits acetylcholine from binding to the receptor, thereby impairing neuromuscular and neuronal transmission. This chain is Long neurotoxin OH-56, found in Ophiophagus hannah (King cobra).